Consider the following 24-residue polypeptide: Ascaphin-6 (24 aa).

As to expression, expressed by the skin glands.

The protein resides in the secreted. Its function is as follows. Antimicrobial peptide that shows higher potency against Gram-negative bacteria than against Gram-positive bacteria. Has a very week hemolytic activity. In Ascaphus truei (Coastal tailed frog), this protein is Ascaphin-6.